Here is a 237-residue protein sequence, read N- to C-terminus: MRPSGRQTHEMRGVSIETGFTRHAEGSCLISMGETRVLCTASVEERVPPFLRNTGLGWVTAEYGMLPRATHTRGRREAAAGKQSGRTQEIQRLIGRSLRAGVDRVALGERQITIDCDVIQADGGTRCASITGAWVALRLAVNKLMKAGDIITDPLTDHVAAVSCGLYAGQPVLDLDYAEDSEAGTDANFVMTGSGGLIEVQGSAEGAPFSRNALNTLMDLAEVGVAELVAAQKAATS.

Phosphate-binding positions include R86 and 124–126 (GTR).

The protein belongs to the RNase PH family. In terms of assembly, homohexameric ring arranged as a trimer of dimers.

It catalyses the reaction tRNA(n+1) + phosphate = tRNA(n) + a ribonucleoside 5'-diphosphate. In terms of biological role, phosphorolytic 3'-5' exoribonuclease that plays an important role in tRNA 3'-end maturation. Removes nucleotide residues following the 3'-CCA terminus of tRNAs; can also add nucleotides to the ends of RNA molecules by using nucleoside diphosphates as substrates, but this may not be physiologically important. Probably plays a role in initiation of 16S rRNA degradation (leading to ribosome degradation) during starvation. This is Ribonuclease PH from Dinoroseobacter shibae (strain DSM 16493 / NCIMB 14021 / DFL 12).